Consider the following 216-residue polypeptide: Large ribosomal subunit protein uL3 (216 aa).

Residues 119–143 (GYQGNIHKDGQSRGPMAHGSRYHRR) are disordered.

The protein belongs to the universal ribosomal protein uL3 family. Part of the 50S ribosomal subunit. Forms a cluster with proteins L14 and L19.

One of the primary rRNA binding proteins, it binds directly near the 3'-end of the 23S rRNA, where it nucleates assembly of the 50S subunit. This is Large ribosomal subunit protein uL3 from Levilactobacillus brevis (strain ATCC 367 / BCRC 12310 / CIP 105137 / JCM 1170 / LMG 11437 / NCIMB 947 / NCTC 947) (Lactobacillus brevis).